The sequence spans 63 residues: Prokaryotic ubiquitin-like protein Pup (63 aa).

Residues Met-1–Thr-35 form a disordered region. The tract at residues Asp-19–Tyr-57 is ARC ATPase binding. Glu-63 is covalently cross-linked (Isoglutamyl lysine isopeptide (Glu-Lys) (interchain with K-? in acceptor proteins)).

The protein belongs to the prokaryotic ubiquitin-like protein family. As to quaternary structure, strongly interacts with the proteasome-associated ATPase ARC through a hydrophobic interface; the interacting region of Pup lies in its C-terminal half. There is one Pup binding site per ARC hexamer ring.

It participates in protein degradation; proteasomal Pup-dependent pathway. Protein modifier that is covalently attached to lysine residues of substrate proteins, thereby targeting them for proteasomal degradation. The tagging system is termed pupylation. In Corynebacterium aurimucosum (strain ATCC 700975 / DSM 44827 / CIP 107346 / CN-1) (Corynebacterium nigricans), this protein is Prokaryotic ubiquitin-like protein Pup.